Consider the following 128-residue polypeptide: Aspartate 1-decarboxylase (128 aa).

The active-site Schiff-base intermediate with substrate; via pyruvic acid is Ser-25. Ser-25 carries the pyruvic acid (Ser) modification. Substrate is bound at residue Thr-57. The active-site Proton donor is the Tyr-58. 73-75 (GAA) provides a ligand contact to substrate.

It belongs to the PanD family. Heterooctamer of four alpha and four beta subunits. Pyruvate serves as cofactor. Post-translationally, is synthesized initially as an inactive proenzyme, which is activated by self-cleavage at a specific serine bond to produce a beta-subunit with a hydroxyl group at its C-terminus and an alpha-subunit with a pyruvoyl group at its N-terminus.

It is found in the cytoplasm. The catalysed reaction is L-aspartate + H(+) = beta-alanine + CO2. The protein operates within cofactor biosynthesis; (R)-pantothenate biosynthesis; beta-alanine from L-aspartate: step 1/1. Catalyzes the pyruvoyl-dependent decarboxylation of aspartate to produce beta-alanine. The protein is Aspartate 1-decarboxylase of Chlorobaculum parvum (strain DSM 263 / NCIMB 8327) (Chlorobium vibrioforme subsp. thiosulfatophilum).